A 344-amino-acid polypeptide reads, in one-letter code: Heat-inducible transcription repressor HrcA (344 aa).

It belongs to the HrcA family.

In terms of biological role, negative regulator of class I heat shock genes (grpE-dnaK-dnaJ and groELS operons). Prevents heat-shock induction of these operons. This is Heat-inducible transcription repressor HrcA from Streptococcus agalactiae serotype III (strain NEM316).